The chain runs to 274 residues: Cytochrome b-c1 complex subunit Rieske, mitochondrial (274 aa).

The Mitochondrial matrix portion of the chain corresponds to 79-103 (SHTDIKVPDFSDYRRAEVLDSTKSS). A helical membrane pass occupies residues 104–140 (KESSEARKGFSYLVTATTTVGVAYAAKNAVSQFVSSM). The Mitochondrial intermembrane segment spans residues 141–274 (SASADVLAMS…FTSGDVVVVG (134 aa)). Positions 187 to 272 (EAAVEVSQLR…YEFTSGDVVV (86 aa)) constitute a Rieske domain. Cys217, His219, Cys236, His239, and Ser241 together coordinate [2Fe-2S] cluster. Residues Cys222 and Cys238 are joined by a disulfide bond.

It belongs to the Rieske iron-sulfur protein family. Component of the ubiquinol-cytochrome c oxidoreductase (cytochrome b-c1 complex, complex III, CIII), a multisubunit enzyme composed of 11 subunits. The complex is composed of 3 respiratory subunits cytochrome b, cytochrome c1 and Rieske protein UQCRFS1, 2 core protein subunits UQCRC1/QCR1 and UQCRC2/QCR2, and 6 low-molecular weight protein subunits UQCRH/QCR6, UQCRB/QCR7, UQCRQ/QCR8, UQCR10/QCR9, UQCR11/QCR10 and subunit 9, the cleavage product of Rieske protein UQCRFS1. The complex exists as an obligatory dimer and forms supercomplexes (SCs) in the inner mitochondrial membrane with NADH-ubiquinone oxidoreductase (complex I, CI) and cytochrome c oxidase (complex IV, CIV), resulting in different assemblies (supercomplex SCI(1)III(2)IV(1) and megacomplex MCI(2)III(2)IV(2)). Incorporation of the Rieske protein UQCRFS1 is the penultimate step in complex III assembly. Interacts with TTC19, which is involved in the clearance of UQCRFS1 fragments. As to quaternary structure, component of the ubiquinol-cytochrome c oxidoreductase (cytochrome b-c1 complex, complex III, CIII). Subunit 9 corresponds to the mitochondrial targeting sequence (MTS) of Rieske protein UQCRFS1. It is retained after processing and incorporated inside complex III, where it remains bound to the complex and localizes between the 2 core subunits UQCRC1/QCR1 and UQCRC2/QCR2. Requires [2Fe-2S] cluster as cofactor. Post-translationally, proteolytic processing is necessary for the correct insertion of UQCRFS1 in the complex III dimer. Several fragments are generated during UQCRFS1 insertion, most probably due to the endogenous matrix-processing peptidase (MPP) activity of the 2 core protein subunits UQCRC1/QCR1 and UQCRC2/QCR2, which are homologous to the 2 mitochondrial-processing peptidase (MPP) subunits beta-MPP and alpha-MPP respectively. The action of the protease is also necessary for the clearance of the UQCRFS1 fragments.

Its subcellular location is the mitochondrion inner membrane. The catalysed reaction is a quinol + 2 Fe(III)-[cytochrome c](out) = a quinone + 2 Fe(II)-[cytochrome c](out) + 2 H(+)(out). Its function is as follows. Component of the ubiquinol-cytochrome c oxidoreductase, a multisubunit transmembrane complex that is part of the mitochondrial electron transport chain which drives oxidative phosphorylation. The respiratory chain contains 3 multisubunit complexes succinate dehydrogenase (complex II, CII), ubiquinol-cytochrome c oxidoreductase (cytochrome b-c1 complex, complex III, CIII) and cytochrome c oxidase (complex IV, CIV), that cooperate to transfer electrons derived from NADH and succinate to molecular oxygen, creating an electrochemical gradient over the inner membrane that drives transmembrane transport and the ATP synthase. The cytochrome b-c1 complex catalyzes electron transfer from ubiquinol to cytochrome c, linking this redox reaction to translocation of protons across the mitochondrial inner membrane, with protons being carried across the membrane as hydrogens on the quinol. In the process called Q cycle, 2 protons are consumed from the matrix, 4 protons are released into the intermembrane space and 2 electrons are passed to cytochrome c. The Rieske protein is a catalytic core subunit containing a [2Fe-2S] iron-sulfur cluster. It cycles between 2 conformational states during catalysis to transfer electrons from the quinol bound in the Q(0) site in cytochrome b to cytochrome c1. Incorporation of UQCRFS1 is the penultimate step in complex III assembly. In terms of biological role, component of the ubiquinol-cytochrome c oxidoreductase (cytochrome b-c1 complex, complex III, CIII). UQCRFS1 undergoes proteolytic processing once it is incorporated in the complex III dimer. One of the fragments, called subunit 9, corresponds to its mitochondrial targeting sequence (MTS). The proteolytic processing is necessary for the correct insertion of UQCRFS1 in the complex III dimer, but the persistence of UQCRFS1-derived fragments may prevent newly imported UQCRFS1 to be processed and assembled into complex III and is detrimental for the complex III structure and function. The chain is Cytochrome b-c1 complex subunit Rieske, mitochondrial (Uqcrfs1) from Rattus norvegicus (Rat).